Reading from the N-terminus, the 453-residue chain is Cholecystokinin receptor (453 aa).

Over Met1–Ser64 the chain is Extracellular. Asn9, Asn22, Asn30, Asn35, and Asn39 each carry an N-linked (GlcNAc...) asparagine glycan. Residues Asp65 to Val94 traverse the membrane as a helical segment. The Cytoplasmic segment spans residues Met95–Asn104. The chain crosses the membrane as a helical span at residues Ser105–Met131. Residues Glu132–Arg142 are Extracellular-facing. Cys141 and Cys223 are oxidised to a cystine. Residues Ala143 to Ile164 traverse the membrane as a helical segment. At Glu165–His184 the chain is on the cytoplasmic side. The chain crosses the membrane as a helical span at residues Ala185–Val205. Residues Tyr206–Tyr237 lie on the Extracellular side of the membrane. The chain crosses the membrane as a helical span at residues Val238–Arg261. The Cytoplasmic segment spans residues Glu262–Arg343. The chain crosses the membrane as a helical span at residues Met344–Thr364. Residues Trp365–Gly379 are Extracellular-facing. The helical transmembrane segment at Ala380–Met403 threads the bilayer. A lipid anchor (S-palmitoyl cysteine) is attached at Cys401. Over Asn404–Ala453 the chain is Cytoplasmic.

Belongs to the G-protein coupled receptor 1 family. As to expression, brain and stomach.

The protein localises to the cell membrane. Functionally, receptor for cholecystokinin. This receptor mediates its action by association with G proteins that activate a phosphatidylinositol-calcium second messenger system. Has high affinity for CCK-8 and low affinities for gastrin-17-I, CCK-4, and unsulfated CCK-8. This chain is Cholecystokinin receptor (cckar), found in Xenopus laevis (African clawed frog).